The chain runs to 301 residues: Acetylglutamate kinase (301 aa).

Substrate is bound by residues 68 to 69 (GG), Arg-90, and Asn-197.

It belongs to the acetylglutamate kinase family. ArgB subfamily.

It is found in the cytoplasm. It carries out the reaction N-acetyl-L-glutamate + ATP = N-acetyl-L-glutamyl 5-phosphate + ADP. It participates in amino-acid biosynthesis; L-arginine biosynthesis; N(2)-acetyl-L-ornithine from L-glutamate: step 2/4. Catalyzes the ATP-dependent phosphorylation of N-acetyl-L-glutamate. This chain is Acetylglutamate kinase, found in Nitrosococcus oceani (strain ATCC 19707 / BCRC 17464 / JCM 30415 / NCIMB 11848 / C-107).